The following is a 421-amino-acid chain: Acetate kinase (421 aa).

Asn7 lines the Mg(2+) pocket. ATP is bound at residue Lys14. Residue Arg91 coordinates substrate. Residue Asp148 is the Proton donor/acceptor of the active site. ATP-binding positions include 208–212 (HIGNG) and 283–285 (DRR). Glu387 contributes to the Mg(2+) binding site.

It belongs to the acetokinase family. Homodimer. Mg(2+) serves as cofactor. Requires Mn(2+) as cofactor.

Its subcellular location is the cytoplasm. The catalysed reaction is acetate + ATP = acetyl phosphate + ADP. It functions in the pathway metabolic intermediate biosynthesis; acetyl-CoA biosynthesis; acetyl-CoA from acetate: step 1/2. In terms of biological role, catalyzes the formation of acetyl phosphate from acetate and ATP. Can also catalyze the reverse reaction. The protein is Acetate kinase of Trichlorobacter lovleyi (strain ATCC BAA-1151 / DSM 17278 / SZ) (Geobacter lovleyi).